A 140-amino-acid polypeptide reads, in one-letter code: Large ribosomal subunit protein uL11 (140 aa).

The protein belongs to the universal ribosomal protein uL11 family. Part of the ribosomal stalk of the 50S ribosomal subunit. Interacts with L10 and the large rRNA to form the base of the stalk. L10 forms an elongated spine to which L12 dimers bind in a sequential fashion forming a multimeric L10(L12)X complex. In terms of processing, one or more lysine residues are methylated.

In terms of biological role, forms part of the ribosomal stalk which helps the ribosome interact with GTP-bound translation factors. This Staphylococcus aureus (strain bovine RF122 / ET3-1) protein is Large ribosomal subunit protein uL11.